The sequence spans 660 residues: Bifunctional polymyxin resistance protein ArnA (660 aa).

The formyltransferase ArnAFT stretch occupies residues 1–304; that stretch reads MKAVIFAYHD…TLGLVAGARL (304 aa). Histidine 104 (proton donor; for formyltransferase activity) is an active-site residue. Residues arginine 114 and 136-140 each bind (6R)-10-formyltetrahydrofolate; that span reads VKRAD. A dehydrogenase ArnADH region spans residues 314 to 660; the sequence is RRIRVLILGV…RSVDVAERAS (347 aa). NAD(+)-binding positions include aspartate 347 and 368–369; that span reads DI. Residues alanine 393, tyrosine 398, and 432-433 each bind UDP-alpha-D-glucuronate; that span reads TS. Glutamate 434 acts as the Proton acceptor; for decarboxylase activity in catalysis. UDP-alpha-D-glucuronate is bound by residues arginine 460, asparagine 492, 526–535, and tyrosine 613; that span reads KLIDGGQQKR. The Proton donor; for decarboxylase activity role is filled by arginine 619.

It in the N-terminal section; belongs to the Fmt family. UDP-L-Ara4N formyltransferase subfamily. This sequence in the C-terminal section; belongs to the NAD(P)-dependent epimerase/dehydratase family. UDP-glucuronic acid decarboxylase subfamily. As to quaternary structure, homohexamer, formed by a dimer of trimers.

It catalyses the reaction UDP-alpha-D-glucuronate + NAD(+) = UDP-beta-L-threo-pentopyranos-4-ulose + CO2 + NADH. The enzyme catalyses UDP-4-amino-4-deoxy-beta-L-arabinose + (6R)-10-formyltetrahydrofolate = UDP-4-deoxy-4-formamido-beta-L-arabinose + (6S)-5,6,7,8-tetrahydrofolate + H(+). The protein operates within nucleotide-sugar biosynthesis; UDP-4-deoxy-4-formamido-beta-L-arabinose biosynthesis; UDP-4-deoxy-4-formamido-beta-L-arabinose from UDP-alpha-D-glucuronate: step 1/3. Its pathway is nucleotide-sugar biosynthesis; UDP-4-deoxy-4-formamido-beta-L-arabinose biosynthesis; UDP-4-deoxy-4-formamido-beta-L-arabinose from UDP-alpha-D-glucuronate: step 3/3. It participates in bacterial outer membrane biogenesis; lipopolysaccharide biosynthesis. Bifunctional enzyme that catalyzes the oxidative decarboxylation of UDP-glucuronic acid (UDP-GlcUA) to UDP-4-keto-arabinose (UDP-Ara4O) and the addition of a formyl group to UDP-4-amino-4-deoxy-L-arabinose (UDP-L-Ara4N) to form UDP-L-4-formamido-arabinose (UDP-L-Ara4FN). The modified arabinose is attached to lipid A and is required for resistance to polymyxin and cationic antimicrobial peptides. This Salmonella choleraesuis (strain SC-B67) protein is Bifunctional polymyxin resistance protein ArnA.